The chain runs to 620 residues: Chaperone protein HscA homolog (620 aa).

It belongs to the heat shock protein 70 family.

Its function is as follows. Chaperone involved in the maturation of iron-sulfur cluster-containing proteins. Has a low intrinsic ATPase activity which is markedly stimulated by HscB. This is Chaperone protein HscA homolog from Colwellia psychrerythraea (strain 34H / ATCC BAA-681) (Vibrio psychroerythus).